Consider the following 205-residue polypeptide: Large ribosomal subunit protein uL4 (205 aa).

A disordered region spans residues 56-78 (VSGTTAKPYRQKHTGRARQGSLR).

This sequence belongs to the universal ribosomal protein uL4 family. In terms of assembly, part of the 50S ribosomal subunit.

One of the primary rRNA binding proteins, this protein initially binds near the 5'-end of the 23S rRNA. It is important during the early stages of 50S assembly. It makes multiple contacts with different domains of the 23S rRNA in the assembled 50S subunit and ribosome. Functionally, forms part of the polypeptide exit tunnel. This Ehrlichia ruminantium (strain Gardel) protein is Large ribosomal subunit protein uL4.